Reading from the N-terminus, the 431-residue chain is Venom metalloproteinase 1 (431 aa).

Positions 1–22 are cleaved as a signal peptide; that stretch reads MDLFILTRFILFLSFFMKSIHC. N-linked (GlcNAc...) asparagine glycosylation is found at Asn-64, Asn-113, Asn-148, and Asn-187. Residues 228–428 form the Peptidase M12B domain; the sequence is DLLMKTSRRL…TSAACLKDTY (201 aa). Intrachain disulfides connect Cys-340–Cys-423 and Cys-379–Cys-407. A Zn(2+)-binding site is contributed by His-363. Residue Glu-364 is part of the active site. Positions 367 and 373 each coordinate Zn(2+). Asn-414 is a glycosylation site (N-linked (GlcNAc...) asparagine).

This sequence in the C-terminal section; belongs to the venom metalloproteinase (M12B) family. In terms of assembly, monomer. It depends on Zn(2+) as a cofactor. As to expression, expressed by the venom gland.

Its subcellular location is the secreted. With respect to regulation, the gelatinase activity is inhibited by EDTA. The recombinant protein has gelatinase activity. In vivo, injection of this recombinant into fifth instar L.oleracea (host) larvae results in partial insect mortality associated with the molt to sixth instar, with surviving insects showing retarded development and growth. The sequence is that of Venom metalloproteinase 1 from Eulophus pennicornis (Parasitoid wasp).